Reading from the N-terminus, the 431-residue chain is 3-phosphoshikimate 1-carboxyvinyltransferase (431 aa).

3-phosphoshikimate contacts are provided by Lys-26, Ser-27, and Arg-31. Lys-26 provides a ligand contact to phosphoenolpyruvate. 2 residues coordinate phosphoenolpyruvate: Gly-99 and Arg-127. 3-phosphoshikimate contacts are provided by Ser-170, Ser-171, Gln-172, Ser-199, Glu-314, and His-343. Phosphoenolpyruvate is bound at residue Gln-172. Glu-314 (proton acceptor) is an active-site residue. Phosphoenolpyruvate is bound by residues Arg-347, Arg-388, and Lys-413.

The protein belongs to the EPSP synthase family. In terms of assembly, monomer.

It is found in the cytoplasm. The catalysed reaction is 3-phosphoshikimate + phosphoenolpyruvate = 5-O-(1-carboxyvinyl)-3-phosphoshikimate + phosphate. It functions in the pathway metabolic intermediate biosynthesis; chorismate biosynthesis; chorismate from D-erythrose 4-phosphate and phosphoenolpyruvate: step 6/7. Functionally, catalyzes the transfer of the enolpyruvyl moiety of phosphoenolpyruvate (PEP) to the 5-hydroxyl of shikimate-3-phosphate (S3P) to produce enolpyruvyl shikimate-3-phosphate and inorganic phosphate. This is 3-phosphoshikimate 1-carboxyvinyltransferase from Mycobacterium marinum (strain ATCC BAA-535 / M).